The following is a 206-amino-acid chain: MNEWQQRVIALAGMSLSAMAVQKLARSGELYPESISNTLVHSLLQQNPDNIEDIYGGLDNIKPGIQAFIRQAGSNKNKDIEVTRYLIGLIHLSRRLLKQPDILNLLGERITQVKRQKEEFEFENYRIQQSLAGIYRELISPLGQPIRINGNPEFLKRDSNQHHIRTLLLAGIRSAVLWQQVGGKRRHFVFSRKKMLDTAQQLLHVA.

It belongs to the HflD family.

Its subcellular location is the cytoplasm. The protein localises to the cell inner membrane. This chain is High frequency lysogenization protein HflD homolog, found in Idiomarina loihiensis (strain ATCC BAA-735 / DSM 15497 / L2-TR).